Here is an 857-residue protein sequence, read N- to C-terminus: DNA mismatch repair protein MutS (857 aa).

608–615 contacts ATP; that stretch reads GPNMSGKS.

The protein belongs to the DNA mismatch repair MutS family.

This protein is involved in the repair of mismatches in DNA. It is possible that it carries out the mismatch recognition step. This protein has a weak ATPase activity. The protein is DNA mismatch repair protein MutS of Lacticaseibacillus paracasei (strain ATCC 334 / BCRC 17002 / CCUG 31169 / CIP 107868 / KCTC 3260 / NRRL B-441) (Lactobacillus paracasei).